The chain runs to 138 residues: Large ribosomal subunit protein uL16c (138 aa).

Residues M1–S21 are disordered. Basic residues predominate over residues T7–S21.

This sequence belongs to the universal ribosomal protein uL16 family. In terms of assembly, part of the 50S ribosomal subunit.

The protein localises to the plastid. The protein resides in the chloroplast. This chain is Large ribosomal subunit protein uL16c, found in Cycas taitungensis (Prince sago).